We begin with the raw amino-acid sequence, 346 residues long: High mobility group protein 20A (346 aa).

Polar residues-rich tracts occupy residues methionine 1 to leucine 10 and serine 55 to serine 65. Disordered stretches follow at residues methionine 1–phenylalanine 112 and phenylalanine 178–lysine 210. Positions asparagine 71–serine 81 are enriched in basic and acidic residues. Residues lysine 82 to proline 95 show a composition bias toward basic residues. Residues proline 102–glutamine 170 constitute a DNA-binding region (HMG box). The residue at position 104 (serine 104) is a Phosphoserine. Residues lysine 181–lysine 210 show a composition bias toward basic and acidic residues. Residues serine 228 to glutamine 272 are a coiled coil.

Interacts with DTNB. As to expression, expressed in brain. Detected in mature neurons.

It is found in the nucleus. In terms of biological role, plays a role in neuronal differentiation as chromatin-associated protein. Acts as inhibitor of HMG20B. Overcomes the repressive effects of the neuronal silencer REST and induces the activation of neuronal-specific genes. Involved in the recruitment of the histone methyltransferase KMT2A/MLL1 and consequent increased methylation of histone H3 lysine 4. This Mus musculus (Mouse) protein is High mobility group protein 20A (Hmg20a).